Reading from the N-terminus, the 429-residue chain is E3 ubiquitin-protein ligase ZNRF4 (429 aa).

The first 27 residues, 1 to 27 (MPLCRPEHLMPRASRVPVAASLPLSHA), serve as a signal peptide directing secretion. The Lumenal segment spans residues 28–250 (VIPTQLPSRP…PPCHDLGCHP (223 aa)). The tract at residues 30–67 (PTQLPSRPGHRPPGRPRRCPKASCLPPPVGPSSTQTAK) is disordered. A compositionally biased stretch (basic residues) spans 37–49 (PGHRPPGRPRRCP). N-linked (GlcNAc...) asparagine glycosylation is found at Asn107, Asn152, and Asn229. Residues 151–223 (GNRSLGAIVL…VSEAASQDLR (73 aa)) form the PA domain. The helical transmembrane segment at 251 to 271 (VLTVSWVLGCTLALVVSAFFV) threads the bilayer. Residues 272-429 (LNHLWLWAQA…SSAPPEAPGQ (158 aa)) are Cytoplasmic-facing. An RING-type; atypical zinc finger spans residues 309–352 (CAICLDEYEEGDQLKILPCSHTYHCKCIDPWFSQAPRRSCPVCK).

As to quaternary structure, interacts with CANX.

Its subcellular location is the endoplasmic reticulum membrane. It catalyses the reaction S-ubiquitinyl-[E2 ubiquitin-conjugating enzyme]-L-cysteine + [acceptor protein]-L-lysine = [E2 ubiquitin-conjugating enzyme]-L-cysteine + N(6)-ubiquitinyl-[acceptor protein]-L-lysine.. Its pathway is protein modification; protein ubiquitination. Its function is as follows. E3 ubiquitin-protein ligase that acts as a negative regulator of NOD2 signaling by mediating ubiquitination and degradation of RIPK2. Also catalyzes ubiquitination and proteasomal degradation of CANX within the endoplasmic reticulum. Could have a role in spermatogenesis. The protein is E3 ubiquitin-protein ligase ZNRF4 of Homo sapiens (Human).